A 2352-amino-acid polypeptide reads, in one-letter code: Highly reducing polyketide synthase ZEA2 (2352 aa).

A Ketosynthase family 3 (KS3) domain is found at 9 to 433; the sequence is PGPVAIVGLA…GTNGHVVLEA (425 aa). Catalysis depends on for beta-ketoacyl synthase activity residues C181, H316, and H356. The segment at 544–875 is malonyl-CoA:ACP transacylase (MAT) domain; it reads FVFTGQGAQW…LATSLFLQGV (332 aa). S634 serves as the catalytic For malonyltransferase activity. The tract at residues 923-1058 is N-terminal hotdog fold; that stretch reads RSIIGAPVPK…GLITIDYEGN (136 aa). One can recognise a PKS/mFAS DH domain in the interval 923-1242; the sequence is RSIIGAPVPK…TSELEMDGAA (320 aa). Residues 925–1237 form a dehydratase (DH) domain region; it reads IIGAPVPKMN…VIDFRTSELE (313 aa). The Proton acceptor; for dehydratase activity role is filled by H955. A C-terminal hotdog fold region spans residues 1086-1242; that stretch reads PATYAKDRFY…TSELEMDGAA (157 aa). D1152 acts as the Proton donor; for dehydratase activity in catalysis. Positions 1643–1955 are enoylreductase (ER) domain; that stretch reads GLLDTLYFVD…QGKHRGKIVL (313 aa). Residues 1979 to 2159 form a catalytic ketoreductase (KRc) domain region; sequence ATYLFVGGLG…VSVNLGIMRD (181 aa). The Carrier domain occupies 2269–2346; that stretch reads KATEIITNAL…SFAGKLASTS (78 aa). At S2306 the chain carries O-(pantetheine 4'-phosphoryl)serine.

It participates in mycotoxin biosynthesis. Functionally, highly reducing polyketide synthase; part of the gene cluster that mediates the biosynthesis of zearalenone (ZEA), a nonsteroid estrogen that is a contaminant of cereal grains and causes estrogenic disorders in humans and animals. The ZEA backbone is synthesized from a single acetyl-CoA molecule and eight malonyl-CoA molecules. The reducing polyketide synthase ZEA2 is proposed to synthesize a reduced hexaketide intermediate by using different combinations of its reductive domains during each round of condensation. The hexaketide thioester is then transacylated to the non-reducing polyketide synthase ZEA1 and is further condensed with three malonyl-CoAs without reductive tailoring to yield a mixed reduced/unreduced nonaketide. ZEA1 must be able to interact with ZEA2 to facilitate starter-unit acyltransfer and initiate polyketide biosynthesis. ZEA1 also mediates the required C2-C7 cyclization to form the resorcylate core and catalyzes the formation of the macrolactone. ZEB1 is then responsible for the chemical conversion of beta-zearalenonol (beta-ZOL) to ZEA in the biosynthetic pathway. The chain is Highly reducing polyketide synthase ZEA2 from Gibberella zeae (strain ATCC MYA-4620 / CBS 123657 / FGSC 9075 / NRRL 31084 / PH-1) (Wheat head blight fungus).